The primary structure comprises 1239 residues: Zinc finger and BTB domain-containing protein 40 (1239 aa).

In terms of domain architecture, BTB spans 24-87; that stretch reads CDCTISIGTI…MYTGKLPVGK (64 aa). Disordered regions lie at residues 130-231, 687-732, and 779-801; these read SAPS…TSTE, HLEA…PDPA, and KELD…PKKK. A compositionally biased stretch (basic and acidic residues) spans 136 to 145; that stretch reads TFRKEPEKPQ. Polar residues predominate over residues 181 to 199; the sequence is SVSQEMSVNSPTAQESQRN. Position 190 is a phosphoserine (serine 190). Over residues 200–212 the composition is skewed to low complexity; it reads AETPAETPTTAEA. Over residues 687-703 the composition is skewed to basic and acidic residues; it reads HLEANNKEDEKAAKEDS. At serine 703 the chain carries Phosphoserine. A compositionally biased stretch (polar residues) spans 705 to 719; it reads PGEQNDQGETGSLPG. C2H2-type zinc fingers lie at residues 807-830, 836-858, 864-887, 893-915, 921-944, 950-973, 978-1000, 1006-1029, 1046-1069, and 1075-1098; these read VTCD…LTEH, FSCE…LRLH, FMCK…KKKH, YACQ…VRTH, YVCR…HTFH, YDCK…HEVH, HPCP…VVTH, FSCG…RTHH, LQCS…KAEH, and HECD…KCQH. Residue lysine 1066 forms a Glycyl lysine isopeptide (Lys-Gly) (interchain with G-Cter in SUMO2) linkage. Residues 1104–1127 form a C2H2-type 11; atypical zinc finger; the sequence is FRCLYCAATFRFPGALQHHVTTEH. Residues 1135–1158 form a C2H2-type 12 zinc finger; it reads FPCELCGELFTSQAQLDSHLESEH.

The protein belongs to the krueppel C2H2-type zinc-finger protein family.

The protein localises to the nucleus. May be involved in transcriptional regulation. The protein is Zinc finger and BTB domain-containing protein 40 (ZBTB40) of Homo sapiens (Human).